The following is a 379-amino-acid chain: MKSVGLITEYNPFHNGHQYHINQSKKLTNADVTIAIMSGNFVMRGEPAIYNKFTRAKMALSTADLVIELPATASLSSGDHFAELAVKVADYMSVDTIAFGSENNNIKTLKQLAHSINEIEQSESFSQKVKEGKSYPRIISELLEHHEALASPNNILGISYLKAIAKHAKNINAISIKRENAQHHDSLIQHHKFASGTSIRTSIISQDDHWHHVVPKDIQHLYVTPHITLNQIFPYLKYQIIAMTTESLKNIYTVTEGFENRLKSYINEATDFHHFVKSLKTKRYTYTHIQRLLMNVLLNIKPTDVTRNIHAVKVLAMNDRGRQYLKHLKTVFPERQYITNINKSNAHYFTNEIKATHIYNAISGQQQTDFNTPVIQQYR.

ATP contacts are provided by residues 7-20, G100, N153, and R178; that span reads ITEY…HQYH.

Belongs to the TmcAL family.

The protein resides in the cytoplasm. It catalyses the reaction cytidine(34) in elongator tRNA(Met) + acetate + ATP = N(4)-acetylcytidine(34) in elongator tRNA(Met) + AMP + diphosphate. Its function is as follows. Catalyzes the formation of N(4)-acetylcytidine (ac(4)C) at the wobble position of elongator tRNA(Met), using acetate and ATP as substrates. First activates an acetate ion to form acetyladenylate (Ac-AMP) and then transfers the acetyl group to tRNA to form ac(4)C34. This chain is tRNA(Met) cytidine acetate ligase, found in Staphylococcus aureus (strain MRSA252).